Here is a 149-residue protein sequence, read N- to C-terminus: Large ribosomal subunit protein uL15 (149 aa).

Composition is skewed to basic residues over residues Met-1–Gly-13 and Arg-21–Arg-42. The segment at Met-1–Asn-44 is disordered.

Belongs to the universal ribosomal protein uL15 family. As to quaternary structure, component of the large ribosomal subunit. Mature ribosomes consist of a small (40S) and a large (60S) subunit. The 40S subunit contains about 32 different proteins and 1 molecule of RNA (18S). The 60S subunit contains 45 different proteins and 3 molecules of RNA (25S, 5.8S and 5S).

Its subcellular location is the cytoplasm. Functionally, component of the ribosome, a large ribonucleoprotein complex responsible for the synthesis of proteins in the cell. The small ribosomal subunit (SSU) binds messenger RNAs (mRNAs) and translates the encoded message by selecting cognate aminoacyl-transfer RNA (tRNA) molecules. The large subunit (LSU) contains the ribosomal catalytic site termed the peptidyl transferase center (PTC), which catalyzes the formation of peptide bonds, thereby polymerizing the amino acids delivered by tRNAs into a polypeptide chain. The nascent polypeptides leave the ribosome through a tunnel in the LSU and interact with protein factors that function in enzymatic processing, targeting, and the membrane insertion of nascent chains at the exit of the ribosomal tunnel. The chain is Large ribosomal subunit protein uL15 from Candida albicans (strain SC5314 / ATCC MYA-2876) (Yeast).